The chain runs to 284 residues: Xyloglucan endotransglucosylase/hydrolase protein 22 (284 aa).

Residues 1-21 (MAITYLLPLFLSLIITSSVSA) form the signal peptide. A GH16 domain is found at 22–211 (NFQRDVEITW…WSKAPFTASY (190 aa)). Glu-97 functions as the Nucleophile in the catalytic mechanism. The active-site Proton donor is Glu-101. Glu-101 serves as a coordination point for xyloglucan. N-linked (GlcNAc...) asparagine glycosylation occurs at Asn-105. Residues 114–116 (HTN), 124–126 (DKE), 190–191 (DW), and Gly-195 contribute to the xyloglucan site. Cys-219 and Cys-228 form a disulfide bridge. Residue Asn-230 is glycosylated (N-linked (GlcNAc...) asparagine). Cysteines 267 and 281 form a disulfide. Arg-272 serves as a coordination point for xyloglucan.

It belongs to the glycosyl hydrolase 16 family. XTH group 2 subfamily. In terms of processing, contains at least one intrachain disulfide bond essential for its enzymatic activity. Post-translationally, N-glycosylated; essential for its enzymatic activity. Highly expressed. Predominantly expressed in green siliques. Expressed in young expanding leaves, trichomes, lateral root primordia, vascular tissue, abscission zones and elongating hypocols. Following wind stimulation, it decreases in the leaves of wind-stimulated plants, while it strongly increases in sites around cells of the pith parenchyma, between the vascular elements, and within the epidermis.

The protein localises to the secreted. The protein resides in the cell wall. It is found in the extracellular space. It localises to the apoplast. The catalysed reaction is breaks a beta-(1-&gt;4) bond in the backbone of a xyloglucan and transfers the xyloglucanyl segment on to O-4 of the non-reducing terminal glucose residue of an acceptor, which can be a xyloglucan or an oligosaccharide of xyloglucan.. Its function is as follows. Catalyzes xyloglucan endohydrolysis (XEH) and/or endotransglycosylation (XET). Cleaves and religates xyloglucan polymers, an essential constituent of the primary cell wall, and thereby participates in cell wall construction of growing tissues. Its induction in case of mechanical stress, suggests that it may contribute in the adaptive changes in morphogenesis by being recruited to alter tissues tensil strength, or flexibility, enabling adaptation to mechanically stressful environments. In Arabidopsis thaliana (Mouse-ear cress), this protein is Xyloglucan endotransglucosylase/hydrolase protein 22 (XTH22).